Consider the following 957-residue polypeptide: Melanoma-associated antigen E1 (957 aa).

The disordered stretch occupies residues 1–455 (MSLVSQNSRR…DSEGPKGAEG (455 aa)). 2 stretches are compositionally biased toward polar residues: residues 85-96 (SEASSASGQPTI) and 104-130 (VLPT…SVTL). The span at 138-162 (TSRPPTSSEEPSTSVPPTASEVPST) shows a compositional bias: low complexity. Polar residues-rich tracts occupy residues 219–244 (GLST…TEGL), 268–320 (PSTS…STSV), 329–344 (STSV…STSV), 364–380 (LSTS…DTSV), and 414–428 (TLFS…NPSK). 2 MAGE domains span residues 491–690 (MEQN…YNEA) and 745–936 (LESK…YREA). The interaction with DTNA stretch occupies residues 743–957 (SRLESKARKL…HRQIFVHNFR (215 aa)).

Interacts with DTNA. Interacts with TRIM28.

It is found in the cytoplasm. Its subcellular location is the perinuclear region. The protein resides in the nucleus. It localises to the cell membrane. Its function is as follows. May enhance ubiquitin ligase activity of RING-type zinc finger-containing E3 ubiquitin-protein ligases. Proposed to act through recruitment and/or stabilization of the Ubl-conjugating enzyme (E2) at the E3:substrate complex. This Homo sapiens (Human) protein is Melanoma-associated antigen E1 (MAGEE1).